A 205-amino-acid chain; its full sequence is Imidazole glycerol phosphate synthase subunit HisH (205 aa).

In terms of domain architecture, Glutamine amidotransferase type-1 spans 3-205 (KIGLIDYGMG…LLRRWIKSIQ (203 aa)). Cys-81 serves as the catalytic Nucleophile. Residues His-185 and Glu-187 contribute to the active site.

In terms of assembly, heterodimer of HisH and HisF.

It localises to the cytoplasm. It catalyses the reaction 5-[(5-phospho-1-deoxy-D-ribulos-1-ylimino)methylamino]-1-(5-phospho-beta-D-ribosyl)imidazole-4-carboxamide + L-glutamine = D-erythro-1-(imidazol-4-yl)glycerol 3-phosphate + 5-amino-1-(5-phospho-beta-D-ribosyl)imidazole-4-carboxamide + L-glutamate + H(+). It carries out the reaction L-glutamine + H2O = L-glutamate + NH4(+). The protein operates within amino-acid biosynthesis; L-histidine biosynthesis; L-histidine from 5-phospho-alpha-D-ribose 1-diphosphate: step 5/9. Its function is as follows. IGPS catalyzes the conversion of PRFAR and glutamine to IGP, AICAR and glutamate. The HisH subunit catalyzes the hydrolysis of glutamine to glutamate and ammonia as part of the synthesis of IGP and AICAR. The resulting ammonia molecule is channeled to the active site of HisF. The chain is Imidazole glycerol phosphate synthase subunit HisH from Prochlorococcus marinus subsp. pastoris (strain CCMP1986 / NIES-2087 / MED4).